Consider the following 890-residue polypeptide: Calcium-transporting ATPase (890 aa).

At 1–47 the chain is on the cytoplasmic side; sequence MKFHEMGQTDLLEATNTSMKQGLTEKEVKKRLDKHGPNELQEGKKTS. Residues 48-68 traverse the membrane as a helical segment; that stretch reads ALLLFFAQFKDFMVLVLLAAT. The Extracellular portion of the chain corresponds to 69–78; sequence LISGFLGEYV. Residues 79–99 traverse the membrane as a helical segment; the sequence is DAVAIIAIVFVNGILGFFQER. Topologically, residues 100 to 238 are cytoplasmic; it reads RAEQSLQALK…TLSTPLQRRL (139 aa). A helical transmembrane segment spans residues 239-258; sequence EQLGKILIVVALLLTVLVVA. Topologically, residues 259-270 are extracellular; that stretch reads VGVIQGHDLYSM. The helical transmembrane segment at 271 to 288 threads the bilayer; it reads FLAGVSLAVAAIPEGLPA. Residues V279, A280, I282, and E284 each contribute to the Ca(2+) site. The Cytoplasmic portion of the chain corresponds to 289-688; it reads IVTVALSLGV…KEGRNIYENI (400 aa). D326 functions as the 4-aspartylphosphate intermediate in the catalytic mechanism. D633 and D637 together coordinate Mg(2+). The helical transmembrane segment at 689–708 threads the bilayer; sequence RKFIRYLLASNVGEILVMLF. Residues N699 and E702 each coordinate Ca(2+). The Extracellular segment spans residues 709–718; it reads AMLLALPLPL. Residues 719–739 form a helical membrane-spanning segment; that stretch reads VPIQILWVNLVTDGLPAMALG. Positions 727, 730, and 731 each coordinate Ca(2+). Residues 740-759 lie on the Cytoplasmic side of the membrane; that stretch reads MDQPEGDVMKRKPRHPKEGV. A helical transmembrane segment spans residues 760–782; sequence FARKLGWKVVSRGFLIGVATILA. The Extracellular segment spans residues 783 to 798; it reads FIIVYHRNPENLAYAQ. Residues 799 to 818 traverse the membrane as a helical segment; the sequence is TIAFATLVLAQLIHVFDCRS. The Cytoplasmic portion of the chain corresponds to 819-830; the sequence is ETSVFSRNPFQN. Residues 831-849 form a helical membrane-spanning segment; that stretch reads LYLIGAVLSSILLMLVVIY. The Extracellular portion of the chain corresponds to 850–864; it reads YPPLQPIFHTVAITP. Residues 865-885 form a helical membrane-spanning segment; sequence GDWMLVIGMSAIPTFLLAGSL. At 886–890 the chain is on the cytoplasmic side; it reads LTRKK.

This sequence belongs to the cation transport ATPase (P-type) (TC 3.A.3) family. Type IIA subfamily. In terms of processing, phosphorylated in a Ca(2+)-dependent manner starting 4 hours after shifting to sporulation medium.

It is found in the cell membrane. It carries out the reaction Ca(2+)(in) + ATP + H2O = Ca(2+)(out) + ADP + phosphate + H(+). Functionally, this magnesium-dependent enzyme catalyzes the hydrolysis of ATP coupled with the transport of calcium. This is Calcium-transporting ATPase (yloB) from Bacillus subtilis (strain 168).